Here is a 680-residue protein sequence, read N- to C-terminus: MIDRYKHQQLRIGLVSPQQISAWATKIIPNGEIVGEVTKPYTFHYKTNKPEKDGLFCERIFGPIKSGICACGNYRVIGDEKEDPKFCEQCGVEFVDSRIRRYQMGYIKLTCPVTHVWYLKRLPSYIANLLDKPLKELEGLVYCDFSFARPITKKPTFLRLRGSFEYEIQSWKYSIPLFFTTQGFDIFRNREISTGAGAIREQLADLDLRIIIENSLVEWKQLGEEGPTGNEWEDRKIVRRKDFLVRRMELAKHFIRTNIEPEWMVLCLLPVLPPELRPIIQIEGGKLMSSDINELYRRVIYRNNTLTDLLTTSRSTPGELVMCQEKLVQEAVDTLLDNGIRGQPMRDGHNKVYKSFSDVIEGKEGRFRETLLGKRVDYSGRSVIVVGPSLSLHRCGLPREIAIELFQTFVIRGLIRQHLASNIGVAKSQIREKKPIVWEILQEVMQGHPVLLNRAPTLHRLGIQSFQPILVEGRTICLHPLVCKGFNADFDGDQMAVHVPLSLEAQAEARLLMFSHMNLLSPAIGDPISVPTQDMLIGLYVLTSGTRRGISANRYNPCNRKNYQNERIYETHYKYTKEPFFCNSYDAIGAYRQKRINLDSPLWLRWQLDQRVIASREVPIEVHYESFGNYHEIYAHYLIVRSVKKETFCIYIRTTVGHISFYREIEEAIQGFSQACSYDT.

Zn(2+) is bound by residues Cys-69, Cys-71, Cys-87, and Cys-90. 3 residues coordinate Mg(2+): Asp-489, Asp-491, and Asp-493.

Belongs to the RNA polymerase beta' chain family. RpoC1 subfamily. In terms of assembly, in plastids the minimal PEP RNA polymerase catalytic core is composed of four subunits: alpha, beta, beta', and beta''. When a (nuclear-encoded) sigma factor is associated with the core the holoenzyme is formed, which can initiate transcription. It depends on Mg(2+) as a cofactor. Zn(2+) serves as cofactor.

The protein resides in the plastid. Its subcellular location is the chloroplast. It carries out the reaction RNA(n) + a ribonucleoside 5'-triphosphate = RNA(n+1) + diphosphate. DNA-dependent RNA polymerase catalyzes the transcription of DNA into RNA using the four ribonucleoside triphosphates as substrates. This chain is DNA-directed RNA polymerase subunit beta', found in Lepidium virginicum (Virginia pepperweed).